Reading from the N-terminus, the 932-residue chain is RNA-binding protein 12 (932 aa).

The tract at residues 97-116 (IPPANASRSGPPPSSGMSGR) is disordered. The segment covering 98–116 (PPANASRSGPPPSSGMSGR) has biased composition (low complexity). The region spanning 304-379 (LYVSVHGMPF…RYVEVSPATE (76 aa)) is the RRM 1 domain. A phosphoserine mark is found at Ser-352 and Ser-375. The segment at 393-424 (QNMGPSGQSHPPPQTLPRSKSPSGQKRSRSRS) is disordered. The span at 408–417 (LPRSKSPSGQ) shows a compositional bias: polar residues. A phosphoserine mark is found at Ser-420, Ser-422, and Ser-424. In terms of domain architecture, RRM 2 spans 430–507 (FCVYLKGLPF…RFIQVHPITK (78 aa)). Ser-525 bears the Phosphoserine mark. Residues 717 to 734 (NGPPFNFPGNFGGSNAFG) show a composition bias toward low complexity. Residues 717 to 853 (NGPPFNFPGN…PGFASSSGKP (137 aa)) are disordered. A compositionally biased stretch (gly residues) spans 783–811 (SGFGGGPQNFGNGPGSLGGPPGFGSGPPG). Pro residues predominate over residues 824-836 (AFGPGPGPGPGPG). Residues 856-932 (TVIKVQNMPF…GSRKVKLVLG (77 aa)) form the RRM 3 domain.

It is found in the nucleus. This is RNA-binding protein 12 (RBM12) from Macaca mulatta (Rhesus macaque).